The chain runs to 598 residues: DNA (cytosine-5)-methyltransferase DRM2 (598 aa).

2 disordered regions span residues 1–49 (MVDW…NGKA) and 114–146 (EVDE…GDED). One can recognise a UBA 1 domain in the interval 42 to 91 (PQDANGKANGSGALVAEFMGMGFPKEMILKAIKEIGDTDTEQLLELLLTY). A compositionally biased stretch (acidic residues) spans 114–128 (EVDEEEDDTNWDEYD). The UBA 2 domain occupies 150-194 (EMSEKDEKMKSLVNMGFPEDEAKMAIDRCGLDAPVAVLVDSIYAS). A disordered region spans residues 227 to 252 (GSKKRKRYGSGPSGNQVPFDGSHEEP). An SAM-dependent MTase DRM-type domain is found at 272-598 (VHRNLPDQAL…EHVKATMSAV (327 aa)).

Belongs to the class I-like SAM-binding methyltransferase superfamily. DRM-methyltransferase family. Interacts (via UBA domains) with EIF4A.

The protein localises to the nucleus. The enzyme catalyses a 2'-deoxycytidine in DNA + S-adenosyl-L-methionine = a 5-methyl-2'-deoxycytidine in DNA + S-adenosyl-L-homocysteine + H(+). Its function is as follows. Involved in de novo DNA methylation. Required for CpG and non-CpG methylation. Required for normal establishment and maintenance of RNA-directed DNA methylation (RdDM) mediated by small interfering RNAs (siRNAs). Regulates proper plant development in both vegetative and reproductive stages through DNA methylation. The polypeptide is DNA (cytosine-5)-methyltransferase DRM2 (Oryza sativa subsp. japonica (Rice)).